Here is a 180-residue protein sequence, read N- to C-terminus: NADH-quinone oxidoreductase subunit I (180 aa).

2 consecutive 4Fe-4S ferredoxin-type domains span residues 48 to 80 (IVLTRDPDGAERCVACNLCAVACPVGCISLQKA) and 90 to 119 (EFFRINFSRCIFCGMCEEACPTTALQLTPD). The [4Fe-4S] cluster site is built by cysteine 60, cysteine 63, cysteine 66, cysteine 70, cysteine 99, cysteine 102, cysteine 105, and cysteine 109.

Belongs to the complex I 23 kDa subunit family. In terms of assembly, NDH-1 is composed of 13 different subunits. Subunits NuoA, H, J, K, L, M, N constitute the membrane sector of the complex. Requires [4Fe-4S] cluster as cofactor.

It is found in the cell inner membrane. It carries out the reaction a quinone + NADH + 5 H(+)(in) = a quinol + NAD(+) + 4 H(+)(out). Its function is as follows. NDH-1 shuttles electrons from NADH, via FMN and iron-sulfur (Fe-S) centers, to quinones in the respiratory chain. The immediate electron acceptor for the enzyme in this species is believed to be ubiquinone. Couples the redox reaction to proton translocation (for every two electrons transferred, four hydrogen ions are translocated across the cytoplasmic membrane), and thus conserves the redox energy in a proton gradient. The protein is NADH-quinone oxidoreductase subunit I of Edwardsiella ictaluri (strain 93-146).